The following is a 91-amino-acid chain: Non-specific lipid-transfer protein 1 (91 aa).

Disulfide bonds link Cys-3–Cys-50, Cys-13–Cys-27, Cys-28–Cys-73, and Cys-48–Cys-87.

This sequence belongs to the plant LTP family.

Plant non-specific lipid-transfer proteins transfer phospholipids as well as galactolipids across membranes. May play a role in wax or cutin deposition in the cell walls of expanding epidermal cells and certain secretory tissues. This Prunus armeniaca (Apricot) protein is Non-specific lipid-transfer protein 1.